The primary structure comprises 327 residues: ATP-dependent 6-phosphofructokinase (327 aa).

ATP contacts are provided by residues glycine 11, 72-73, and 102-105; these read RS and GDGS. Residue aspartate 103 coordinates Mg(2+). 127 to 129 provides a ligand contact to substrate; sequence TID. The active-site Proton acceptor is the aspartate 129. Arginine 156 is a binding site for ADP. Residues arginine 164 and 171 to 173 contribute to the substrate site; that span reads MGR. 187-189 is a binding site for ADP; sequence GAE. Substrate is bound by residues glutamate 224, arginine 245, and 251–254; that span reads HIQR.

The protein belongs to the phosphofructokinase type A (PFKA) family. ATP-dependent PFK group I subfamily. Prokaryotic clade 'B1' sub-subfamily. Homotetramer. Mg(2+) serves as cofactor.

The protein resides in the cytoplasm. The enzyme catalyses beta-D-fructose 6-phosphate + ATP = beta-D-fructose 1,6-bisphosphate + ADP + H(+). It functions in the pathway carbohydrate degradation; glycolysis; D-glyceraldehyde 3-phosphate and glycerone phosphate from D-glucose: step 3/4. With respect to regulation, allosterically activated by ADP and other diphosphonucleosides, and allosterically inhibited by phosphoenolpyruvate. In terms of biological role, catalyzes the phosphorylation of D-fructose 6-phosphate to fructose 1,6-bisphosphate by ATP, the first committing step of glycolysis. This is ATP-dependent 6-phosphofructokinase from Sulfurovum sp. (strain NBC37-1).